We begin with the raw amino-acid sequence, 237 residues long: Glutathione S-transferase L1 (237 aa).

The GST N-terminal domain maps to 29–110 (GTTRLYISYT…YVDSNFDGPS (82 aa)). Glutathione contacts are provided by residues 39-40 (CP), 67-68 (NR), 81-82 (KV), and 94-95 (ES). One can recognise a GST C-terminal domain in the interval 112 to 232 (YPEDSAKREF…KTDSEYVVNY (121 aa)).

Belongs to the GST superfamily. Lambda family.

Its subcellular location is the cytoplasm. The protein localises to the cytosol. It catalyses the reaction RX + glutathione = an S-substituted glutathione + a halide anion + H(+). Catalyzes the glutathione-dependent reduction of S-glutathionylquercetin to quercetin. In vitro, possesses glutathione-dependent thiol transferase activity toward 2-hydroxyethyl disulfide (HED). In Arabidopsis thaliana (Mouse-ear cress), this protein is Glutathione S-transferase L1 (GSTL1).